The primary structure comprises 224 residues: Ribonuclease HII (224 aa).

The region spanning 1–210 is the RNase H type-2 domain; sequence MKIGGIDEAG…VRKIEESIKA (210 aa). 3 residues coordinate a divalent metal cation: Asp7, Glu8, and Asp105.

This sequence belongs to the RNase HII family. The cofactor is Mn(2+). Mg(2+) serves as cofactor.

It is found in the cytoplasm. The enzyme catalyses Endonucleolytic cleavage to 5'-phosphomonoester.. Its function is as follows. Endonuclease that specifically degrades the RNA of RNA-DNA hybrids. This Pyrococcus furiosus (strain ATCC 43587 / DSM 3638 / JCM 8422 / Vc1) protein is Ribonuclease HII.